We begin with the raw amino-acid sequence, 1076 residues long: Guanylyl cyclase C (1076 aa).

Residues 1-23 (MKSPLLGLVVWSLLLQLLQPGLA) form the signal peptide. At 24-433 (FWNSQISQNC…PHDIPGLGPH (410 aa)) the chain is on the extracellular side. Asparagine 35, asparagine 82, asparagine 191, asparagine 198, asparagine 287, asparagine 306, asparagine 310, asparagine 348, and asparagine 405 each carry an N-linked (GlcNAc...) asparagine glycan. The chain crosses the membrane as a helical span at residues 434–457 (ILLIAVCTLAGVVVLILLIALLVL). At 458 to 1076 (RKYKKDNELR…NTTDQDSTYF (619 aa)) the chain is on the cytoplasmic side. Residues 492-752 (LKIDDDKKRD…KIENTLAKIF (261 aa)) enclose the Protein kinase domain. Positions 827-957 (TVYFSDIVGF…DTVNTASRME (131 aa)) constitute a Guanylate cyclase domain.

The protein belongs to the adenylyl cyclase class-4/guanylyl cyclase family. Homotrimer. Interacts via its C-terminal region with NHERF4. Interacts with the lectin chaperone VIP36. Glycosylation at Asn-62 is required for interaction with VIP36 while glycosylation at Asn-348 and Asn-405 modulates ligand-mediated GC-C activation.

Its subcellular location is the cell membrane. The protein localises to the endoplasmic reticulum membrane. The catalysed reaction is GTP = 3',5'-cyclic GMP + diphosphate. Its function is as follows. Guanylyl cyclase that catalyzes synthesis of cyclic GMP (cGMP) from GTP. This is Guanylyl cyclase C (GUCY2C) from Cavia porcellus (Guinea pig).